A 428-amino-acid polypeptide reads, in one-letter code: Enolase (428 aa).

Q163 is a (2R)-2-phosphoglycerate binding site. E205 (proton donor) is an active-site residue. Mg(2+) contacts are provided by D242, E283, and D310. Residues K335, R364, S365, and K386 each contribute to the (2R)-2-phosphoglycerate site. The Proton acceptor role is filled by K335.

It belongs to the enolase family. It depends on Mg(2+) as a cofactor.

The protein localises to the cytoplasm. The protein resides in the secreted. Its subcellular location is the cell surface. It carries out the reaction (2R)-2-phosphoglycerate = phosphoenolpyruvate + H2O. It participates in carbohydrate degradation; glycolysis; pyruvate from D-glyceraldehyde 3-phosphate: step 4/5. Functionally, catalyzes the reversible conversion of 2-phosphoglycerate (2-PG) into phosphoenolpyruvate (PEP). It is essential for the degradation of carbohydrates via glycolysis. The sequence is that of Enolase from Saccharopolyspora erythraea (strain ATCC 11635 / DSM 40517 / JCM 4748 / NBRC 13426 / NCIMB 8594 / NRRL 2338).